Here is a 341-residue protein sequence, read N- to C-terminus: Anthranilate phosphoribosyltransferase (341 aa).

Residues Gly82, 85-86 (GD), Thr90, 92-95 (NIST), 110-118 (KHGGRSVSG), and Ser122 each bind 5-phospho-alpha-D-ribose 1-diphosphate. Gly82 contacts anthranilate. Residue Ser94 participates in Mg(2+) binding. Position 168 (Arg168) interacts with anthranilate. Positions 227 and 228 each coordinate Mg(2+).

This sequence belongs to the anthranilate phosphoribosyltransferase family. As to quaternary structure, homodimer. Requires Mg(2+) as cofactor.

The enzyme catalyses N-(5-phospho-beta-D-ribosyl)anthranilate + diphosphate = 5-phospho-alpha-D-ribose 1-diphosphate + anthranilate. The protein operates within amino-acid biosynthesis; L-tryptophan biosynthesis; L-tryptophan from chorismate: step 2/5. Functionally, catalyzes the transfer of the phosphoribosyl group of 5-phosphorylribose-1-pyrophosphate (PRPP) to anthranilate to yield N-(5'-phosphoribosyl)-anthranilate (PRA). This is Anthranilate phosphoribosyltransferase from Nitrosomonas europaea (strain ATCC 19718 / CIP 103999 / KCTC 2705 / NBRC 14298).